We begin with the raw amino-acid sequence, 101 residues long: Small ribosomal subunit protein uS14 (101 aa).

The segment covering 1–10 (MAKKSSIEKN) has biased composition (basic and acidic residues). A disordered region spans residues 1–23 (MAKKSSIEKNNRRKRMVKNAAPK).

The protein belongs to the universal ribosomal protein uS14 family. In terms of assembly, part of the 30S ribosomal subunit. Contacts proteins S3 and S10.

Its function is as follows. Binds 16S rRNA, required for the assembly of 30S particles and may also be responsible for determining the conformation of the 16S rRNA at the A site. This is Small ribosomal subunit protein uS14 from Bradyrhizobium diazoefficiens (strain JCM 10833 / BCRC 13528 / IAM 13628 / NBRC 14792 / USDA 110).